Here is a 157-residue protein sequence, read N- to C-terminus: Peptide methionine sulfoxide reductase MsrA (157 aa).

The active site involves cysteine 10.

It belongs to the MsrA Met sulfoxide reductase family.

The enzyme catalyses L-methionyl-[protein] + [thioredoxin]-disulfide + H2O = L-methionyl-(S)-S-oxide-[protein] + [thioredoxin]-dithiol. The catalysed reaction is [thioredoxin]-disulfide + L-methionine + H2O = L-methionine (S)-S-oxide + [thioredoxin]-dithiol. Functionally, has an important function as a repair enzyme for proteins that have been inactivated by oxidation. Catalyzes the reversible oxidation-reduction of methionine sulfoxide in proteins to methionine. The chain is Peptide methionine sulfoxide reductase MsrA from Clostridium botulinum (strain Okra / Type B1).